A 607-amino-acid chain; its full sequence is WD repeat-containing protein 1-A (607 aa).

WD repeat units follow at residues 4 to 45 (ELKK…IRNI), 48 to 87 (PAIA…IWDT), 93 to 135 (LLKY…LWDT), 138 to 176 (SVGE…FLEG), 180 to 218 (KFKF…LYDG), 224 to 263 (VCSL…IWDV), 270 to 306 (TTFN…YLDK), 311 to 351 (RPLR…YWDA), 358 to 408 (TFTG…KMDV), 432 to 474 (LKDK…LYSI), 480 to 518 (KDEG…VFSV), 523 to 561 (SEKN…VWTL), and 566 to 604 (TRIK…QWTV).

The protein belongs to the WD repeat AIP1 family.

Its subcellular location is the cell membrane. It is found in the cytoplasm. The protein resides in the cytoskeleton. The protein localises to the nucleus. Its function is as follows. Induces disassembly of actin filaments in conjunction with ADF/cofilin family proteins. Doesn't sever actin filaments alone, but caps the barbed ends of filaments severed by cofilin, which blocks annealing and depolymerization and allows more extensive severing by cofilin. The sequence is that of WD repeat-containing protein 1-A (wdr1-a) from Xenopus laevis (African clawed frog).